A 126-amino-acid chain; its full sequence is MIRTMLQGKLHRVKVTQADLHYEGSCAIDQDFLDASGILENEAIDIWNVTNGKRFSTYAIAAERGSRIISVNGAAAHCAEVGDIVIIASFVTMSDEEARTWSPKVAYFEGDNEMKRTAKAIPVQVA.

The active-site Schiff-base intermediate with substrate; via pyruvic acid is the Ser25. Ser25 bears the Pyruvic acid (Ser) mark. A substrate-binding site is contributed by Thr57. Residue Tyr58 is the Proton donor of the active site. Position 73–75 (73–75) interacts with substrate; the sequence is GAA.

The protein belongs to the PanD family. Heterooctamer of four alpha and four beta subunits. Requires pyruvate as cofactor. Is synthesized initially as an inactive proenzyme, which is activated by self-cleavage at a specific serine bond to produce a beta-subunit with a hydroxyl group at its C-terminus and an alpha-subunit with a pyruvoyl group at its N-terminus.

The protein localises to the cytoplasm. It carries out the reaction L-aspartate + H(+) = beta-alanine + CO2. It participates in cofactor biosynthesis; (R)-pantothenate biosynthesis; beta-alanine from L-aspartate: step 1/1. In terms of biological role, catalyzes the pyruvoyl-dependent decarboxylation of aspartate to produce beta-alanine. This chain is Aspartate 1-decarboxylase, found in Salmonella dublin (strain CT_02021853).